Here is an 80-residue protein sequence, read N- to C-terminus: Cytochrome c oxidase subunit 7B, mitochondrial (80 aa).

Residues 1–24 (MFPLVKSALNRLQVRSIQQTMARQ) constitute a mitochondrion transit peptide. At 25 to 32 (SHQKRTPD) the chain is on the mitochondrial matrix side. A helical transmembrane segment spans residues 33-59 (FHDKYGNAVLASGATFCIVTWTYVATQ). Topologically, residues 60–80 (VGIEWNLSPVGRVTPKEWRNQ) are mitochondrial intermembrane.

This sequence belongs to the cytochrome c oxidase VIIb family. In terms of assembly, component of the cytochrome c oxidase (complex IV, CIV), a multisubunit enzyme composed of 14 subunits. The complex is composed of a catalytic core of 3 subunits MT-CO1, MT-CO2 and MT-CO3, encoded in the mitochondrial DNA, and 11 supernumerary subunits COX4I1 (or COX4I2), COX5A, COX5B, COX6A1 (or COX6A2), COX6B1 (or COX6B2), COX6C, COX7A2 (or COX7A1), COX7B, COX7C, COX8A and NDUFA4, which are encoded in the nuclear genome. The complex exists as a monomer or a dimer and forms supercomplexes (SCs) in the inner mitochondrial membrane with NADH-ubiquinone oxidoreductase (complex I, CI) and ubiquinol-cytochrome c oxidoreductase (cytochrome b-c1 complex, complex III, CIII), resulting in different assemblies (supercomplex SCI(1)III(2)IV(1) and megacomplex MCI(2)III(2)IV(2)).

The protein localises to the mitochondrion inner membrane. The protein operates within energy metabolism; oxidative phosphorylation. Its function is as follows. Component of the cytochrome c oxidase, the last enzyme in the mitochondrial electron transport chain which drives oxidative phosphorylation. The respiratory chain contains 3 multisubunit complexes succinate dehydrogenase (complex II, CII), ubiquinol-cytochrome c oxidoreductase (cytochrome b-c1 complex, complex III, CIII) and cytochrome c oxidase (complex IV, CIV), that cooperate to transfer electrons derived from NADH and succinate to molecular oxygen, creating an electrochemical gradient over the inner membrane that drives transmembrane transport and the ATP synthase. Cytochrome c oxidase is the component of the respiratory chain that catalyzes the reduction of oxygen to water. Electrons originating from reduced cytochrome c in the intermembrane space (IMS) are transferred via the dinuclear copper A center (CU(A)) of subunit 2 and heme A of subunit 1 to the active site in subunit 1, a binuclear center (BNC) formed by heme A3 and copper B (CU(B)). The BNC reduces molecular oxygen to 2 water molecules using 4 electrons from cytochrome c in the IMS and 4 protons from the mitochondrial matrix. Plays a role in proper central nervous system (CNS) development in vertebrates. This chain is Cytochrome c oxidase subunit 7B, mitochondrial (COX7B), found in Homo sapiens (Human).